A 197-amino-acid chain; its full sequence is 3-isopropylmalate dehydratase small subunit (197 aa).

It belongs to the LeuD family. LeuD type 1 subfamily. In terms of assembly, heterodimer of LeuC and LeuD.

The catalysed reaction is (2R,3S)-3-isopropylmalate = (2S)-2-isopropylmalate. Its pathway is amino-acid biosynthesis; L-leucine biosynthesis; L-leucine from 3-methyl-2-oxobutanoate: step 2/4. In terms of biological role, catalyzes the isomerization between 2-isopropylmalate and 3-isopropylmalate, via the formation of 2-isopropylmaleate. The chain is 3-isopropylmalate dehydratase small subunit from Streptococcus suis (strain 98HAH33).